The primary structure comprises 155 residues: Interleukin-2 (155 aa).

Positions 1-20 are cleaved as a signal peptide; it reads MYSRQLASCVALALVLLANS. O-linked (GalNAc...) threonine glycosylation occurs at T23. Cysteines 78 and 126 form a disulfide.

It belongs to the IL-2 family.

The protein localises to the secreted. In terms of biological role, cytokine produced by activated CD4-positive helper T-cells and to a lesser extend activated CD8-positive T-cells and natural killer (NK) cells that plays pivotal roles in the immune response and tolerance. Binds to a receptor complex composed of either the high-affinity trimeric IL-2R (IL2RA/CD25, IL2RB/CD122 and IL2RG/CD132) or the low-affinity dimeric IL-2R (IL2RB and IL2RG). Interaction with the receptor leads to oligomerization and conformation changes in the IL-2R subunits resulting in downstream signaling starting with phosphorylation of JAK1 and JAK3. In turn, JAK1 and JAK3 phosphorylate the receptor to form a docking site leading to the phosphorylation of several substrates including STAT5. This process leads to activation of several pathways including STAT, phosphoinositide-3-kinase/PI3K and mitogen-activated protein kinase/MAPK pathways. Functions as a T-cell growth factor and can increase NK-cell cytolytic activity as well. Promotes strong proliferation of activated B-cells and subsequently immunoglobulin production. Plays a pivotal role in regulating the adaptive immune system by controlling the survival and proliferation of regulatory T-cells, which are required for the maintenance of immune tolerance. Moreover, participates in the differentiation and homeostasis of effector T-cell subsets, including Th1, Th2, Th17 as well as memory CD8-positive T-cells. The polypeptide is Interleukin-2 (IL2) (Meriones unguiculatus (Mongolian jird)).